The following is a 670-amino-acid chain: Soluble lamin-associated protein of 75 kDa (670 aa).

Disordered regions lie at residues 273–301 (PKRPMSGEYGPASVPEYEARTEDNQSSEM) and 314–670 (STSE…AKLT). A Phosphoserine modification is found at S350. Over residues 358–375 (SQTSLTASINKLESTARP) the composition is skewed to polar residues. Residues 378–387 (SSEEFLEEEP) are compositionally biased toward acidic residues. S379 carries the post-translational modification Phosphoserine. Residues 414 to 423 (EKQDGEKESE) are compositionally biased toward basic and acidic residues. Over residues 442–453 (TEEEDSTSEVLD) the composition is skewed to acidic residues. S449 is modified (phosphoserine). The segment covering 460–470 (PFNSSEDSTNL) has biased composition (polar residues). Composition is skewed to basic and acidic residues over residues 479-494 (KPPEVDAPDKTPRIPD) and 504-514 (SDEKGHMEEKL). A Phosphoserine modification is found at S515. 2 stretches are compositionally biased toward polar residues: residues 558–569 (ENLSPNTTSSLE) and 579–591 (PQETSTALPQSSL). 3 positions are modified to phosphoserine: S615, S618, and S635. Residues 651-670 (NLRRKAKGHKGPAKKKAKLT) show a composition bias toward basic residues.

It belongs to the FAM169 family.

Its subcellular location is the nucleus envelope. The protein resides in the nucleus inner membrane. This is Soluble lamin-associated protein of 75 kDa (FAM169A) from Homo sapiens (Human).